We begin with the raw amino-acid sequence, 618 residues long: 1-deoxy-D-xylulose-5-phosphate synthase (618 aa).

Thiamine diphosphate is bound by residues His-70 and 111–113 (GHS). Asp-142 is a binding site for Mg(2+). Thiamine diphosphate-binding positions include 143–144 (GS), Asn-171, Tyr-278, and Glu-360. Asn-171 lines the Mg(2+) pocket.

The protein belongs to the transketolase family. DXPS subfamily. As to quaternary structure, homodimer. Requires Mg(2+) as cofactor. Thiamine diphosphate serves as cofactor.

It carries out the reaction D-glyceraldehyde 3-phosphate + pyruvate + H(+) = 1-deoxy-D-xylulose 5-phosphate + CO2. Its pathway is metabolic intermediate biosynthesis; 1-deoxy-D-xylulose 5-phosphate biosynthesis; 1-deoxy-D-xylulose 5-phosphate from D-glyceraldehyde 3-phosphate and pyruvate: step 1/1. In terms of biological role, catalyzes the acyloin condensation reaction between C atoms 2 and 3 of pyruvate and glyceraldehyde 3-phosphate to yield 1-deoxy-D-xylulose-5-phosphate (DXP). This Helicobacter pylori (strain G27) protein is 1-deoxy-D-xylulose-5-phosphate synthase.